Reading from the N-terminus, the 273-residue chain is Undecaprenyl-diphosphatase (273 aa).

8 consecutive transmembrane segments (helical) span residues 4 to 24 (IELL…WLPI), 45 to 65 (FMSM…VVLF), 84 to 104 (TFTL…MIPF), 112 to 132 (FFNP…FIII), 149 to 169 (ITYQ…IPGT), 187 to 207 (YVAA…ASLL), 219 to 239 (AEIV…IIVI), and 251 to 271 (FKVF…YFLL).

This sequence belongs to the UppP family.

It localises to the cell membrane. It catalyses the reaction di-trans,octa-cis-undecaprenyl diphosphate + H2O = di-trans,octa-cis-undecaprenyl phosphate + phosphate + H(+). In terms of biological role, catalyzes the dephosphorylation of undecaprenyl diphosphate (UPP). Confers resistance to bacitracin. The polypeptide is Undecaprenyl-diphosphatase (Lachnoclostridium phytofermentans (strain ATCC 700394 / DSM 18823 / ISDg) (Clostridium phytofermentans)).